A 234-amino-acid polypeptide reads, in one-letter code: Leucyl/phenylalanyl-tRNA--protein transferase (234 aa).

The protein belongs to the L/F-transferase family.

The protein localises to the cytoplasm. It catalyses the reaction N-terminal L-lysyl-[protein] + L-leucyl-tRNA(Leu) = N-terminal L-leucyl-L-lysyl-[protein] + tRNA(Leu) + H(+). The enzyme catalyses N-terminal L-arginyl-[protein] + L-leucyl-tRNA(Leu) = N-terminal L-leucyl-L-arginyl-[protein] + tRNA(Leu) + H(+). It carries out the reaction L-phenylalanyl-tRNA(Phe) + an N-terminal L-alpha-aminoacyl-[protein] = an N-terminal L-phenylalanyl-L-alpha-aminoacyl-[protein] + tRNA(Phe). Functions in the N-end rule pathway of protein degradation where it conjugates Leu, Phe and, less efficiently, Met from aminoacyl-tRNAs to the N-termini of proteins containing an N-terminal arginine or lysine. In Escherichia coli O81 (strain ED1a), this protein is Leucyl/phenylalanyl-tRNA--protein transferase.